A 213-amino-acid chain; its full sequence is High frequency lysogenization protein HflD (213 aa).

A coiled-coil region spans residues 99-126 (LSSAKGALDTLGNRINGLQRQLEHFDLQ).

The protein belongs to the HflD family. In terms of assembly, interacts with CII protein from phage lambda.

Its subcellular location is the cytoplasm. The protein localises to the cell inner membrane. In terms of biological role, negative regulator of phage lambda lysogenization. Contributes to the degradation of the phage regulatory protein CII. Acts probably by holding CII on the membrane surface, away from the target promoters, but close to the FtsH protease. The polypeptide is High frequency lysogenization protein HflD (Escherichia coli O157:H7).